A 239-amino-acid polypeptide reads, in one-letter code: Adapter protein MecA (239 aa).

Residues 118-128 are compositionally biased toward basic and acidic residues; sequence EQRTKEKEAQG. Positions 118-137 are disordered; it reads EQRTKEKEAQGSKRQKSSAR.

This sequence belongs to the MecA family. As to quaternary structure, homodimer.

In terms of biological role, enables the recognition and targeting of unfolded and aggregated proteins to the ClpC protease or to other proteins involved in proteolysis. The polypeptide is Adapter protein MecA (Staphylococcus aureus (strain COL)).